The primary structure comprises 569 residues: Formate--tetrahydrofolate ligase (569 aa).

64–71 is an ATP binding site; that stretch reads TPHGEGKT.

The protein belongs to the formate--tetrahydrofolate ligase family.

It catalyses the reaction (6S)-5,6,7,8-tetrahydrofolate + formate + ATP = (6R)-10-formyltetrahydrofolate + ADP + phosphate. It functions in the pathway one-carbon metabolism; tetrahydrofolate interconversion. The protein is Formate--tetrahydrofolate ligase of Shewanella sp. (strain MR-7).